A 121-amino-acid polypeptide reads, in one-letter code: Putative iron-sulfur cluster insertion protein ErpA 1 (121 aa).

3 residues coordinate iron-sulfur cluster: Cys-49, Cys-113, and Cys-115.

The protein belongs to the HesB/IscA family. In terms of assembly, homodimer. Requires iron-sulfur cluster as cofactor.

Functionally, required for insertion of 4Fe-4S clusters. The sequence is that of Putative iron-sulfur cluster insertion protein ErpA 1 from Polaromonas naphthalenivorans (strain CJ2).